The chain runs to 301 residues: MGSIIDNLETEKRNINSENIDIMSTCEIIKTINSEDKKIAYAIEKVIPEIEKLIDATYEKMLFGGRVIYIGAGTSGRLGVLDASECPPTYGVDASLVQGIIAGGYGALLKAKEGAEDSLTLAKEDLKEIKLNSHDTVIGLAASGRTPYVIGGLDYANEIGALTGAISCVNNAQISQHAKYFIEAIVGAEVITGSTRMKAGTAQKMILNMISTSLMIKKGKVYHNLMVDVQPTNKKLIERSKNIIAECTNSSVEEAEKALIDSGNQVKVAMLMLLTKKDKKSCINILNENDGNISKSIRNIP.

Residues 57 to 220 enclose the SIS domain; that stretch reads TYEKMLFGGR…STSLMIKKGK (164 aa). The Proton donor role is filled by glutamate 85. Residue glutamate 116 is part of the active site.

Belongs to the GCKR-like family. MurNAc-6-P etherase subfamily. In terms of assembly, homodimer.

The catalysed reaction is N-acetyl-D-muramate 6-phosphate + H2O = N-acetyl-D-glucosamine 6-phosphate + (R)-lactate. It participates in amino-sugar metabolism; N-acetylmuramate degradation. Functionally, specifically catalyzes the cleavage of the D-lactyl ether substituent of MurNAc 6-phosphate, producing GlcNAc 6-phosphate and D-lactate. This Clostridium botulinum (strain Eklund 17B / Type B) protein is N-acetylmuramic acid 6-phosphate etherase.